Consider the following 243-residue polypeptide: Putative glycerophosphodiester phosphodiesterase YhdW (243 aa).

The 238-residue stretch at 1–238 (MYIIAHRGAS…DYPDFIIKDG (238 aa)) folds into the GP-PDE domain. The Proton acceptor role is filled by His6. Ca(2+)-binding residues include Glu33 and Asp35. His48 serves as the catalytic Proton donor. Glu107 serves as a coordination point for Ca(2+).

This sequence belongs to the glycerophosphoryl diester phosphodiesterase family. It depends on Ca(2+) as a cofactor.

The enzyme catalyses a sn-glycero-3-phosphodiester + H2O = an alcohol + sn-glycerol 3-phosphate + H(+). In terms of biological role, glycerophosphodiester phosphodiesterase hydrolyzes glycerophosphodiesters into glycerol-3-phosphate (G3P) and the corresponding alcohol. The chain is Putative glycerophosphodiester phosphodiesterase YhdW (yhdW) from Bacillus subtilis (strain 168).